Consider the following 158-residue polypeptide: Endoribonuclease YbeY (158 aa).

His124, His128, and His134 together coordinate Zn(2+).

The protein belongs to the endoribonuclease YbeY family. Zn(2+) serves as cofactor.

The protein localises to the cytoplasm. Single strand-specific metallo-endoribonuclease involved in late-stage 70S ribosome quality control and in maturation of the 3' terminus of the 16S rRNA. This is Endoribonuclease YbeY from Latilactobacillus sakei subsp. sakei (strain 23K) (Lactobacillus sakei subsp. sakei).